The chain runs to 455 residues: Peroxisomal membrane protein PEX3 (455 aa).

Residues 113–125 show a composition bias toward polar residues; sequence TVLSDDFSTSQEG. The segment at 113-135 is disordered; it reads TVLSDDFSTSQEGAISEDTNKPP. Residues 155 to 171 traverse the membrane as a helical segment; that stretch reads FLTLIYCESLLIVFLHL.

Belongs to the peroxin-3 family. In terms of assembly, component of the peroxisomal docking complex, composed of at least PEX3, PEX13, PEX14 and PEX17. Component of the peroxisomal translocation complex, composed of at least PEX3, PEX2, PEX10 and PEX12. Interacts with PEX19. Interacts with the pexophagy receptor ATG30.

It localises to the peroxisome membrane. Functionally, peroxisomal membrane protein required for peroxisome biosynthesis. Shared component of both the peroxisomal docking complex and the peroxisomal translocation complex. The two types of peroxisomal matrix targeting signals, PTS1 and PTS2, are first recognized in the cytosol by their receptors PEX5 and PEX7, respectively, which then carry the cargo to the peroxisomal membrane. The peroxisomal targeting signal (PTS) receptor-cargo complexes interact with peroxisomal membrane protein (PMP) components of the docking complex. They have then additional downstream interactions with the translocation complex, leading to the transport of fully folded and oligomerized cargo into the peroxisome matrix. PEX3 acts as an anchoring site for PEX19 on the peroxisomal membrane and thus plays a crucial role in the assembly of the peroxisomal translocation complex. Is also essential for the interaction between the two complexes. Finally. PEX3 activates selective autophagy of peroxisomes (pexophagy) via interaction with the pexophagy receptor ATG30. The chain is Peroxisomal membrane protein PEX3 from Komagataella phaffii (strain GS115 / ATCC 20864) (Yeast).